Reading from the N-terminus, the 542-residue chain is CTP synthase (542 aa).

The tract at residues 1 to 265 (MTRYVFITGG…DREILAHFQM (265 aa)) is amidoligase domain. Residue serine 13 participates in CTP binding. Serine 13 contributes to the UTP binding site. Residues 14–19 (SLGKGL) and aspartate 71 contribute to the ATP site. Mg(2+) contacts are provided by aspartate 71 and glutamate 139. CTP-binding positions include 146–148 (DIE), 186–191 (KTKPTQ), and lysine 222. Residues 186–191 (KTKPTQ) and lysine 222 contribute to the UTP site. 238–240 (RDV) is a binding site for ATP. In terms of domain architecture, Glutamine amidotransferase type-1 spans 291-541 (TIAIVGKYTG…IAAAIEQSRL (251 aa)). An L-glutamine-binding site is contributed by glycine 353. Cysteine 380 functions as the Nucleophile; for glutamine hydrolysis in the catalytic mechanism. Residues 381 to 384 (FGMQ), glutamate 404, and arginine 469 each bind L-glutamine. Catalysis depends on residues histidine 514 and glutamate 516.

Belongs to the CTP synthase family. As to quaternary structure, homotetramer.

The catalysed reaction is UTP + L-glutamine + ATP + H2O = CTP + L-glutamate + ADP + phosphate + 2 H(+). It catalyses the reaction L-glutamine + H2O = L-glutamate + NH4(+). The enzyme catalyses UTP + NH4(+) + ATP = CTP + ADP + phosphate + 2 H(+). Its pathway is pyrimidine metabolism; CTP biosynthesis via de novo pathway; CTP from UDP: step 2/2. Its activity is regulated as follows. Allosterically activated by GTP, when glutamine is the substrate; GTP has no effect on the reaction when ammonia is the substrate. The allosteric effector GTP functions by stabilizing the protein conformation that binds the tetrahedral intermediate(s) formed during glutamine hydrolysis. Inhibited by the product CTP, via allosteric rather than competitive inhibition. Its function is as follows. Catalyzes the ATP-dependent amination of UTP to CTP with either L-glutamine or ammonia as the source of nitrogen. Regulates intracellular CTP levels through interactions with the four ribonucleotide triphosphates. This Methylorubrum populi (strain ATCC BAA-705 / NCIMB 13946 / BJ001) (Methylobacterium populi) protein is CTP synthase.